Consider the following 640-residue polypeptide: Chaperone protein DnaK (640 aa).

T196 bears the Phosphothreonine; by autocatalysis mark. Disordered stretches follow at residues 510 to 530 (NDAK…ETKN) and 598 to 640 (AADA…DKDK).

This sequence belongs to the heat shock protein 70 family.

Its function is as follows. Acts as a chaperone. This Prosthecochloris aestuarii (strain DSM 271 / SK 413) protein is Chaperone protein DnaK.